The chain runs to 394 residues: Subtilisin-like protease 4 (394 aa).

The first 17 residues, 1–17 (CLKTLSVFLAAFAAADA), serve as a signal peptide directing secretion. A propeptide spanning residues 18 to 116 (RAVFKTQGHK…VEQDQVVRIS (99 aa)) is cleaved from the precursor. In terms of domain architecture, Inhibitor I9 spans 36 to 115 (YIVVMKDGVS…YVEQDQVVRI (80 aa)). Asparagine 100 carries an N-linked (GlcNAc...) asparagine glycan. One can recognise a Peptidase S8 domain in the interval 126-394 (SWGLGRVSHR…STTNRLLYNG (269 aa)). Active-site charge relay system residues include aspartate 158 and histidine 189. N-linked (GlcNAc...) asparagine glycosylation is found at asparagine 250 and asparagine 306. The Charge relay system role is filled by serine 344.

The protein belongs to the peptidase S8 family.

It localises to the secreted. Secreted subtilisin-like serine protease with keratinolytic activity that contributes to pathogenicity. The protein is Subtilisin-like protease 4 (SUB4) of Trichophyton equinum (Horse ringworm fungus).